A 467-amino-acid chain; its full sequence is UPF0236 protein TTE0610/TTE0881/TTE1053/TTE2432 (467 aa).

Belongs to the UPF0236 family.

This Caldanaerobacter subterraneus subsp. tengcongensis (strain DSM 15242 / JCM 11007 / NBRC 100824 / MB4) (Thermoanaerobacter tengcongensis) protein is UPF0236 protein TTE0610/TTE0881/TTE1053/TTE2432.